The chain runs to 20 residues: FIQYLAPLIPHAVKAISDLI.

Position 20 is an isoleucine amide (Ile20).

As to expression, expressed by the skin dorsal glands.

It localises to the secreted. In terms of biological role, has no antimicrobial activities against bacteria (E.coli and S.aureus) nor against the fungus C.albicans. This Kassina senegalensis (Senegal running frog) protein is Kassinatuerin-2.